A 1316-amino-acid chain; its full sequence is MLDVNFFDELRIGLATAEDIRQWSYGEVKKPETINYRTLKPEKDGLFCEKIFGPTRDWECYCGKYKRVRFKGIICERCGVEVTRAKVRRERMGHIELAAPVTHIWYFKGVPSRLGYLLDLAPKDLEKIIYFAAYVITTVDEEMRHNELSTLEAEMMVERKSVEDQRDADLEARAQKLEADLAALEAEGAKADARRKFRDGGEREMRQLRERAQRELDRLEDIWSTFTKLAPKQLIVDENLYRELVDRYGEYFTGAMGAESIQKLMQDFDIEAEAESLREVIRNGKGQKKLRALKRLKVVAAFQQSGNSPMGMVLDAVPVIPPELRPMVQLDGGRFATSDLNDLYRRVINRNNRLKRLIDLGAPDIIVNNEKRMLQESVDALFDNGRRGRPVTGPGNRPLKSLSDLLKGKQGRFRQNLLGKRVDYSGRSVIVVGPQLKLHQCGLPKLMALELFKPFVMKRLVDLNHAQNIKSAKRMVERQRPQVWDVLEEVIAEHPVLLNRAPTLHRLGIQAFEPMLVEGKAIQLHPLVCEAFNADFDGDQMAVHLPLSAEAQAEARILMLSSNNILSPASGRPLAMPRLDMVTGLYYLTTAVDGDTGAYRPAAEDRPESGVYSSPAEAIMAADRGVLSVRAKIKVQLTQVRPPADIEARWFGANGWRPGDPWIADTTLGRVMFNELLPLGYPFVNKQMHKKVQAAIINDLAERYPMIVVAQTVDKLKDAGFYWATRSGVTVSMADVLVPPRKKEILDHYEERADKVEKQFQRGALNHDERNEALVEIWKEATDEVGQALRDHYPVDNPIITIVDSGATGNFTQTRALAGMKGLVTNPKGEFIPRPVKSSFREGLTVLEYFINTHGARKGLADTALRTADSGYLTRRLVDVSQDVIVREHDCQTERGIVVELAVRVPDGSLIRELYIETSAYARTLGANAVDEAGNVIVARGEDLGDPEIDALLAAGITQVKVRSVLTCTTGTGVCATCYGRSMATGKLVDIGEAVGIVAAQSIGEPGTQLTMRTFHQGGVGEDITGGLPRVQELFEARVPRGKAPIADVTGRVRLEDGERFYKITIVPDDGGEEVVYDKLSKRQRLRVFKHADGSERVLSDGDYVEVGQQLMEGSADPHEVLRVQGPREVQIHLVREVQEVYRAQGVSIHDKHIEVIVRQMLRRVTIIDSGSTEFLPGSLIDRAEFESENRRVVAESGEPAAGRPVLMGITKASLATDSWLSAASFQETTRVLTDAAINCRSDKLNGLKENVIIGKLIPAGTGINRYRNIQVQPTEEARASAYTIPSYEDQYYSPDFGQATGAAVPLDDYGYSDYR.

C60, C62, C75, and C78 together coordinate Zn(2+). Mg(2+)-binding residues include D535, D537, and D539. Residues C891, C968, C975, and C978 each contribute to the Zn(2+) site.

This sequence belongs to the RNA polymerase beta' chain family. In terms of assembly, the RNAP catalytic core consists of 2 alpha, 1 beta, 1 beta' and 1 omega subunit. When a sigma factor is associated with the core the holoenzyme is formed, which can initiate transcription. Mg(2+) is required as a cofactor. The cofactor is Zn(2+).

It carries out the reaction RNA(n) + a ribonucleoside 5'-triphosphate = RNA(n+1) + diphosphate. Its function is as follows. DNA-dependent RNA polymerase catalyzes the transcription of DNA into RNA using the four ribonucleoside triphosphates as substrates. This chain is DNA-directed RNA polymerase subunit beta', found in Mycobacterium leprae (strain Br4923).